The primary structure comprises 201 residues: Recombination protein RecR (201 aa).

A C4-type zinc finger spans residues 60–75 (CQVCGNVDVRDPCTVC). One can recognise a Toprim domain in the interval 83 to 178 (SVLVVVAEVA…KVTRLAHGVP (96 aa)).

This sequence belongs to the RecR family.

Functionally, may play a role in DNA repair. It seems to be involved in an RecBC-independent recombinational process of DNA repair. It may act with RecF and RecO. The protein is Recombination protein RecR of Azorhizobium caulinodans (strain ATCC 43989 / DSM 5975 / JCM 20966 / LMG 6465 / NBRC 14845 / NCIMB 13405 / ORS 571).